The primary structure comprises 427 residues: Fc receptor-like B (427 aa).

The signal sequence occupies residues 1-17; that stretch reads MWMLAALLLLVPRSGKA. Ig-like C2-type domains follow at residues 23–101 and 103–189; these read PVLT…LSVS and DWLI…VAVT. 2 cysteine pairs are disulfide-bonded: Cys44-Cys85 and Cys124-Cys168. A glycan (N-linked (GlcNAc...) asparagine) is linked at Asn152. A compositionally biased stretch (polar residues) spans 401–418; the sequence is TPETPNSHVTVNPATPET. The disordered stretch occupies residues 401–427; it reads TPETPNSHVTVNPATPETTVMEGRVDS.

Expressed at low levels. Expressed in B-lymphocytes. Detected in spleen, lymph node, kidney, lung and brain.

The protein localises to the cytoplasm. Its subcellular location is the endoplasmic reticulum. This is Fc receptor-like B (Fcrlb) from Mus musculus (Mouse).